A 333-amino-acid polypeptide reads, in one-letter code: Protein translocase subunit SecF (333 aa).

Helical transmembrane passes span 27 to 47 (AIVM…NFGI), 152 to 172 (VWTA…YIWV), 180 to 200 (LGAV…FAVL), 207 to 227 (TTVA…VVVF), 253 to 275 (TLSR…LIWG), and 285 to 307 (AMVW…IVLF).

The protein belongs to the SecD/SecF family. SecF subfamily. Forms a complex with SecD. Part of the essential Sec protein translocation apparatus which comprises SecA, SecYEG and auxiliary proteins SecDF-YajC and YidC.

The protein localises to the cell inner membrane. Functionally, part of the Sec protein translocase complex. Interacts with the SecYEG preprotein conducting channel. SecDF uses the proton motive force (PMF) to complete protein translocation after the ATP-dependent function of SecA. The chain is Protein translocase subunit SecF from Rhodobacter capsulatus (strain ATCC BAA-309 / NBRC 16581 / SB1003).